The following is a 207-amino-acid chain: Holliday junction branch migration complex subunit RuvA (207 aa).

The domain I stretch occupies residues 1-71; that stretch reads MIVSIAGKLV…RLTPRLIGFS (71 aa). Residues 72–149 are domain II; sequence TLPERQFFDL…RFALMVAGGE (78 aa). Residues 150-155 form a flexible linker region; that stretch reads VADAME. Residues 156-207 form a domain III region; it reads VESPIVSDTYDALVTLGHSESDARKLIDETLATGKKFKDTESLLTAIYQRSK.

It belongs to the RuvA family. In terms of assembly, homotetramer. Forms an RuvA(8)-RuvB(12)-Holliday junction (HJ) complex. HJ DNA is sandwiched between 2 RuvA tetramers; dsDNA enters through RuvA and exits via RuvB. An RuvB hexamer assembles on each DNA strand where it exits the tetramer. Each RuvB hexamer is contacted by two RuvA subunits (via domain III) on 2 adjacent RuvB subunits; this complex drives branch migration. In the full resolvosome a probable DNA-RuvA(4)-RuvB(12)-RuvC(2) complex forms which resolves the HJ.

It localises to the cytoplasm. Its function is as follows. The RuvA-RuvB-RuvC complex processes Holliday junction (HJ) DNA during genetic recombination and DNA repair, while the RuvA-RuvB complex plays an important role in the rescue of blocked DNA replication forks via replication fork reversal (RFR). RuvA specifically binds to HJ cruciform DNA, conferring on it an open structure. The RuvB hexamer acts as an ATP-dependent pump, pulling dsDNA into and through the RuvAB complex. HJ branch migration allows RuvC to scan DNA until it finds its consensus sequence, where it cleaves and resolves the cruciform DNA. The polypeptide is Holliday junction branch migration complex subunit RuvA (Rhodopirellula baltica (strain DSM 10527 / NCIMB 13988 / SH1)).